A 1870-amino-acid chain; its full sequence is Non-reducing polyketide synthase pkgA (1870 aa).

Residues I40–G279 form an N-terminal acylcarrier protein transacylase domain (SAT) region. Positions D416 to D838 constitute a Ketosynthase family 3 (KS3) domain. The interval P453–P492 is disordered. A compositionally biased stretch (basic and acidic residues) spans D455–T472. A compositionally biased stretch (polar residues) spans T473–P492. Active-site for beta-ketoacyl synthase activity residues include C577, H712, and H755. The tract at residues A947–D1282 is malonyl-CoA:ACP transacylase (MAT) domain. The disordered stretch occupies residues R1004–T1027. A compositionally biased stretch (polar residues) spans T1011 to T1027. The interval T1364 to P1704 is product template (PT) domain. Positions Q1368–D1502 are N-terminal hotdog fold. The region spanning Q1368 to P1700 is the PKS/mFAS DH domain. H1400 acts as the Proton acceptor; for dehydratase activity in catalysis. The interval K1538–P1700 is C-terminal hotdog fold. Catalysis depends on D1602, which acts as the Proton donor; for dehydratase activity. In terms of domain architecture, Carrier spans Q1795 to K1870. The residue at position 1832 (S1832) is an O-(pantetheine 4'-phosphoryl)serine.

Requires pantetheine 4'-phosphate as cofactor.

It catalyses the reaction holo-[ACP] + 6 malonyl-CoA + acetyl-CoA + 6 H(+) = 3,5,7,9,11,13-hexaoxotetradecanoyl-[ACP] + 6 CO2 + 7 CoA. It carries out the reaction holo-[ACP] + 5 malonyl-CoA + acetyl-CoA + 5 H(+) = 3,5,7,9,11-pentaoxododecanoyl-[ACP] + 5 CO2 + 6 CoA. The protein operates within secondary metabolite biosynthesis. In terms of biological role, non-reducing polyketide synthase; part of the pkg gene cluster that mediates the biosynthesis of dihydrocitreoisocoumarin and 6,8-dihydroxy-3-(2-oxopropyl)-isocoumarin. The non-reducing polyketide synthase pkgA performs the condensation of one acetyl-CoA starter unit with 6 and 5 malonyl-CoA units, respectively. As pkgA lacks a releasing domain, the thioesterase pkgB is necessary to break the thioester bond and release dihydrocitreoisocoumarin and 6,8-dihydroxy-3-(2-oxopropyl)-isocoumarin from pkgA. The sequence is that of Non-reducing polyketide synthase pkgA from Emericella nidulans (strain FGSC A4 / ATCC 38163 / CBS 112.46 / NRRL 194 / M139) (Aspergillus nidulans).